The primary structure comprises 282 residues: 4-hydroxy-3-methylbut-2-enyl diphosphate reductase (282 aa).

Cys-14 lines the [4Fe-4S] cluster pocket. His-43 and His-78 together coordinate (2E)-4-hydroxy-3-methylbut-2-enyl diphosphate. The dimethylallyl diphosphate site is built by His-43 and His-78. 2 residues coordinate isopentenyl diphosphate: His-43 and His-78. [4Fe-4S] cluster is bound at residue Cys-100. Position 128 (His-128) interacts with (2E)-4-hydroxy-3-methylbut-2-enyl diphosphate. His-128 is a dimethylallyl diphosphate binding site. His-128 lines the isopentenyl diphosphate pocket. Residue Glu-130 is the Proton donor of the active site. Thr-164 is a binding site for (2E)-4-hydroxy-3-methylbut-2-enyl diphosphate. Cys-192 contacts [4Fe-4S] cluster. Positions 220, 221, 222, and 266 each coordinate (2E)-4-hydroxy-3-methylbut-2-enyl diphosphate. Ser-220, Ser-221, Asn-222, and Ser-266 together coordinate dimethylallyl diphosphate. 4 residues coordinate isopentenyl diphosphate: Ser-220, Ser-221, Asn-222, and Ser-266.

It belongs to the IspH family. It depends on [4Fe-4S] cluster as a cofactor.

It catalyses the reaction isopentenyl diphosphate + 2 oxidized [2Fe-2S]-[ferredoxin] + H2O = (2E)-4-hydroxy-3-methylbut-2-enyl diphosphate + 2 reduced [2Fe-2S]-[ferredoxin] + 2 H(+). The catalysed reaction is dimethylallyl diphosphate + 2 oxidized [2Fe-2S]-[ferredoxin] + H2O = (2E)-4-hydroxy-3-methylbut-2-enyl diphosphate + 2 reduced [2Fe-2S]-[ferredoxin] + 2 H(+). Its pathway is isoprenoid biosynthesis; dimethylallyl diphosphate biosynthesis; dimethylallyl diphosphate from (2E)-4-hydroxy-3-methylbutenyl diphosphate: step 1/1. It functions in the pathway isoprenoid biosynthesis; isopentenyl diphosphate biosynthesis via DXP pathway; isopentenyl diphosphate from 1-deoxy-D-xylulose 5-phosphate: step 6/6. Its function is as follows. Catalyzes the conversion of 1-hydroxy-2-methyl-2-(E)-butenyl 4-diphosphate (HMBPP) into a mixture of isopentenyl diphosphate (IPP) and dimethylallyl diphosphate (DMAPP). Acts in the terminal step of the DOXP/MEP pathway for isoprenoid precursor biosynthesis. The chain is 4-hydroxy-3-methylbut-2-enyl diphosphate reductase from Clostridium perfringens (strain ATCC 13124 / DSM 756 / JCM 1290 / NCIMB 6125 / NCTC 8237 / Type A).